Here is a 589-residue protein sequence, read N- to C-terminus: ATP-dependent ubiquitin transferase-like protein Cap2 (589 aa).

Residue Cys13 forms a Glycyl cysteine dithioester (Cys-Gly) (interchain with G-Cter in DncV) linkage. Residue Lys77 forms a Glycyl lysine isopeptide (Lys-Gly) (interchain with G-Cter in DncV) linkage. Cys91 acts as the For E2-like domain in catalysis. Residues Lys305, Lys387, and Lys484 each participate in a glycyl lysine isopeptide (Lys-Gly) (interchain with G-Cter in DncV) cross-link. Residue Cys493 forms a Glycyl cysteine dithioester (Cys-Gly) (interchain with G-Cter in DncV) linkage. Catalysis depends on for E1-like domain residues Cys493, Cys496, and Cys513. Cys513 participates in a covalent cross-link: Glycyl cysteine dithioester (Cys-Gly) (interchain with G-Cter in DncV). A Glycyl lysine isopeptide (Lys-Gly) (interchain with G-Cter in DncV) cross-link involves residue Lys523.

It in the C-terminal section; belongs to the HesA/MoeB/ThiF family. As to quaternary structure, a Cap2 dimer is bound on either side by a DncV monomer. Conjugated to DncV via 5 different Lys residues and 3 Cys residues.

Its function is as follows. CD-NTase priming component of a CBASS antiviral system. CBASS (cyclic oligonucleotide-based antiphage signaling system) provides immunity against bacteriophages. The CD-NTase protein (DncV) synthesizes cyclic nucleotides in response to infection; these serve as specific second messenger signals. The signals activate a diverse range of effectors, leading to bacterial cell death and thus abortive phage infection. A type II-A(GA) CBASS system. Functionally, conjugates DncV to itself in vitro and to other cellular proteins in vivo; conjugation requires ATP. This primes DncV, upon phage infection CdnA activates and makes cyclic nucleotides. Protects E.coli against phage infection. When capV and dncV are introduced in E.coli MG1655 there is 1000-fold protection against phage P1; protection against other phage (T2, T4, T5, T6 and lambda-vir) requires the 2 subsequent genes. In another paper the capV-dncV-cap2-cap3 operon gives 10(4)-10(5)-fold protection against phages lambda, T2, T4 and T6, about 1000-fold protection against P1 and 10-fold protection against T5. This is ATP-dependent ubiquitin transferase-like protein Cap2 from Escherichia coli (strain TW11681).